We begin with the raw amino-acid sequence, 250 residues long: 7-cyano-7-deazaguanine synthase (250 aa).

Residue 28 to 38 (LSGGLDSATCV) coordinates ATP. 4 residues coordinate Zn(2+): Cys213, Cys226, Cys229, and Cys232.

The protein belongs to the QueC family. Requires Zn(2+) as cofactor.

The catalysed reaction is 7-carboxy-7-deazaguanine + NH4(+) + ATP = 7-cyano-7-deazaguanine + ADP + phosphate + H2O + H(+). It functions in the pathway purine metabolism; 7-cyano-7-deazaguanine biosynthesis. Functionally, catalyzes the ATP-dependent conversion of 7-carboxy-7-deazaguanine (CDG) to 7-cyano-7-deazaguanine (preQ(0)). The polypeptide is 7-cyano-7-deazaguanine synthase (Rhodopirellula baltica (strain DSM 10527 / NCIMB 13988 / SH1)).